Here is a 302-residue protein sequence, read N- to C-terminus: MSLTIQDLILKLKLFWEKQGCAILQPLDMEVGAGTSHPMTCLRAIGPEPIFISYIQPSRRFSDGRYGKNPNRLQHYYQFQVIMKPSPINIQDIYLISLQEIGININNNDIKFIEDDWENDTLGAWGVGWEVWINGMEVTQFTYFQQMGGLNCFPITGEITYGIERIAMKLQNIDNVYDLIWSNNFFQKITYKEMFYQNEIQQSVYNFEHSNIEFLLFCFKQYEKEAIKLINLKNPLFIPAYEKLLKAIYNFNLLDARKAISLTAKKNYTIRLRSLTNEISKLYLNYRKSLGFPMCKNNESIS.

The protein belongs to the class-II aminoacyl-tRNA synthetase family. Tetramer of two alpha and two beta subunits.

The protein resides in the cytoplasm. It catalyses the reaction tRNA(Gly) + glycine + ATP = glycyl-tRNA(Gly) + AMP + diphosphate. The polypeptide is Glycine--tRNA ligase alpha subunit (Wigglesworthia glossinidia brevipalpis).